Consider the following 187-residue polypeptide: Elongation factor P (187 aa).

The protein belongs to the elongation factor P family.

It localises to the cytoplasm. It participates in protein biosynthesis; polypeptide chain elongation. In terms of biological role, involved in peptide bond synthesis. Stimulates efficient translation and peptide-bond synthesis on native or reconstituted 70S ribosomes in vitro. Probably functions indirectly by altering the affinity of the ribosome for aminoacyl-tRNA, thus increasing their reactivity as acceptors for peptidyl transferase. In Synechococcus sp. (strain CC9311), this protein is Elongation factor P.